The primary structure comprises 234 residues: Probable pectate lyase F (234 aa).

Positions 1–17 are cleaved as a signal peptide; the sequence is MFSRIALLPAFLPVALA. Asn-168 and Asn-194 each carry an N-linked (GlcNAc...) asparagine glycan.

This sequence belongs to the polysaccharide lyase 3 family. Ca(2+) is required as a cofactor.

It localises to the secreted. It catalyses the reaction Eliminative cleavage of (1-&gt;4)-alpha-D-galacturonan to give oligosaccharides with 4-deoxy-alpha-D-galact-4-enuronosyl groups at their non-reducing ends.. Functionally, pectinolytic enzyme consist of four classes of enzymes: pectin lyase, polygalacturonase, pectin methylesterase and rhamnogalacturonase. Among pectinolytic enzymes, pectin lyase is the most important in depolymerization of pectin, since it cleaves internal glycosidic bonds of highly methylated pectins. Favors pectate, the anion, over pectin, the methyl ester. This Aspergillus flavus (strain ATCC 200026 / FGSC A1120 / IAM 13836 / NRRL 3357 / JCM 12722 / SRRC 167) protein is Probable pectate lyase F (plyF).